A 47-amino-acid polypeptide reads, in one-letter code: Large ribosomal subunit protein bL34 (47 aa).

It belongs to the bacterial ribosomal protein bL34 family.

This Mycolicibacterium vanbaalenii (strain DSM 7251 / JCM 13017 / BCRC 16820 / KCTC 9966 / NRRL B-24157 / PYR-1) (Mycobacterium vanbaalenii) protein is Large ribosomal subunit protein bL34.